A 528-amino-acid polypeptide reads, in one-letter code: Membrane protein insertase YidC (528 aa).

Helical transmembrane passes span 5 to 25 (VVIA…IFPP), 346 to 366 (YGIA…PLTH), 416 to 436 (LPMI…MFSI), and 486 to 506 (MLAL…GLVL).

The protein belongs to the OXA1/ALB3/YidC family. Type 1 subfamily. Interacts with the Sec translocase complex via SecD. Specifically interacts with transmembrane segments of nascent integral membrane proteins during membrane integration.

It is found in the cell inner membrane. Functionally, required for the insertion and/or proper folding and/or complex formation of integral membrane proteins into the membrane. Involved in integration of membrane proteins that insert both dependently and independently of the Sec translocase complex, as well as at least some lipoproteins. Aids folding of multispanning membrane proteins. The chain is Membrane protein insertase YidC from Geotalea uraniireducens (strain Rf4) (Geobacter uraniireducens).